We begin with the raw amino-acid sequence, 374 residues long: Nuclear hormone receptor family member nhr-57 (374 aa).

A DNA-binding region (nuclear receptor) is located at residues 7-84 (RKYCSVCHQL…VGMNPEVVQA (78 aa)). 2 NR C4-type zinc fingers span residues 10-30 (CSVC…CKAC) and 48-67 (CRKK…CKSC). The NR LBD domain occupies 124–374 (QMTPTLCGVM…DKIYKIIDGQ (251 aa)).

Belongs to the nuclear hormone receptor family.

Its subcellular location is the nucleus. Its function is as follows. Orphan nuclear receptor. The protein is Nuclear hormone receptor family member nhr-57 (nhr-57) of Caenorhabditis elegans.